The chain runs to 438 residues: Histidine--tRNA ligase (438 aa).

The protein belongs to the class-II aminoacyl-tRNA synthetase family. Homodimer.

Its subcellular location is the cytoplasm. It catalyses the reaction tRNA(His) + L-histidine + ATP = L-histidyl-tRNA(His) + AMP + diphosphate + H(+). This Aromatoleum aromaticum (strain DSM 19018 / LMG 30748 / EbN1) (Azoarcus sp. (strain EbN1)) protein is Histidine--tRNA ligase.